We begin with the raw amino-acid sequence, 247 residues long: UPF0246 protein LSL_1719 (247 aa).

Belongs to the UPF0246 family.

This chain is UPF0246 protein LSL_1719, found in Ligilactobacillus salivarius (strain UCC118) (Lactobacillus salivarius).